Reading from the N-terminus, the 259-residue chain is Thiazole synthase (259 aa).

The active-site Schiff-base intermediate with DXP is lysine 98. Residues glycine 159, 185–186 (AG), and 207–208 (NS) each bind 1-deoxy-D-xylulose 5-phosphate.

It belongs to the ThiG family. Homotetramer. Forms heterodimers with either ThiH or ThiS.

The protein resides in the cytoplasm. The catalysed reaction is [ThiS sulfur-carrier protein]-C-terminal-Gly-aminoethanethioate + 2-iminoacetate + 1-deoxy-D-xylulose 5-phosphate = [ThiS sulfur-carrier protein]-C-terminal Gly-Gly + 2-[(2R,5Z)-2-carboxy-4-methylthiazol-5(2H)-ylidene]ethyl phosphate + 2 H2O + H(+). The protein operates within cofactor biosynthesis; thiamine diphosphate biosynthesis. Functionally, catalyzes the rearrangement of 1-deoxy-D-xylulose 5-phosphate (DXP) to produce the thiazole phosphate moiety of thiamine. Sulfur is provided by the thiocarboxylate moiety of the carrier protein ThiS. In vitro, sulfur can be provided by H(2)S. The sequence is that of Thiazole synthase from Chlorobium phaeovibrioides (strain DSM 265 / 1930) (Prosthecochloris vibrioformis (strain DSM 265)).